Reading from the N-terminus, the 83-residue chain is Putative membrane protein insertion efficiency factor (83 aa).

This sequence belongs to the UPF0161 family.

The protein localises to the cell membrane. Functionally, could be involved in insertion of integral membrane proteins into the membrane. This Staphylococcus saprophyticus subsp. saprophyticus (strain ATCC 15305 / DSM 20229 / NCIMB 8711 / NCTC 7292 / S-41) protein is Putative membrane protein insertion efficiency factor.